The sequence spans 1460 residues: DNA-binding protein RFX7 (1460 aa).

The disordered stretch occupies residues 1–34 (MAEEQQQPPPQQPDAHQQLPPSAPNSGVALPALV). A DNA-binding region (RFX-type winged-helix) is located at residues 108-183 (AFSWIRNTLE…YCYSGLRKKA (76 aa)). The short motif at 188–193 (PTLPNL) is the PxLPxI/L motif; mediates interaction with ANKRA2 and RFXANK element. Positions 308-352 (QRKIQKKQQEQKLQSPLPGESAAKKSESATSNGVTNLPNGNPSIL) are disordered. A Phosphoserine modification is found at S322. Over residues 337 to 352 (TSNGVTNLPNGNPSIL) the composition is skewed to polar residues. At S379 the chain carries Phosphoserine. Polar residues predominate over residues 404 to 416 (SVKQAPKTPQNVP). The disordered stretch occupies residues 404–428 (SVKQAPKTPQNVPASPGGDRSARHR). 2 positions are modified to phosphoserine: S418 and S455. Residues 481–513 (TPSNSNTPLKHSASVSSATGTTEESRSVPQIKN) show a composition bias toward polar residues. 3 disordered regions span residues 481 to 585 (TPSN…PSNE), 632 to 715 (TFTS…AQIP), and 917 to 1015 (QSVT…SVPP). Over residues 515–535 (SVVSLQSPGSRSSSAGGTSAV) the composition is skewed to low complexity. A compositionally biased stretch (basic and acidic residues) spans 537-549 (VKVEPETSSDEHP). Composition is skewed to polar residues over residues 563–583 (QTPS…QKPS) and 632–644 (TFTS…NGDS). Residue T564 is modified to Phosphothreonine. S662 carries the phosphoserine modification. K704 is modified (N6-acetyllysine). Polar residues-rich tracts occupy residues 705-715 (TEGSTAGAQIP) and 917-933 (QSVT…SSTH). The span at 947-963 (TPTPTPTPTPTPTPTPT) shows a compositional bias: pro residues. Residues 971-1009 (GSQSLSRESPCSRLAQTTPVDSALGSSRHTPIGTPHSNC) are compositionally biased toward polar residues. T988 is subject to Phosphothreonine. Residues S1178 and S1329 each carry the phosphoserine modification.

It belongs to the RFX family. Interacts (via PxLPxI/L motif) with RFXANK (via ankyrin repeats). Interacts (via PxLPxI/L motif) with ANKRA2 (via ankyrin repeats). Widely expressed in many different tissue types including thymus and placenta, with high expression in brain. Expressed in both inhibitory and excitatory neurons in cortex.

The protein resides in the nucleus. In terms of biological role, transcription factor. Acts as a transcriptional activator by binding to promoter regions of target genes, such as PDCD4, PIK3IP1, MXD4, PNRC1, and RFX5. Plays a role in natural killer (NK) cell maintenance and immunity. May play a role in the process of ciliogenesis in the neural tube and neural tube closure. This chain is DNA-binding protein RFX7, found in Homo sapiens (Human).